The following is a 319-amino-acid chain: 4-hydroxy-3-methylbut-2-enyl diphosphate reductase (319 aa).

C15 lines the [4Fe-4S] cluster pocket. The (2E)-4-hydroxy-3-methylbut-2-enyl diphosphate site is built by H44 and H77. Dimethylallyl diphosphate-binding residues include H44 and H77. H44 and H77 together coordinate isopentenyl diphosphate. C99 serves as a coordination point for [4Fe-4S] cluster. H127 contacts (2E)-4-hydroxy-3-methylbut-2-enyl diphosphate. A dimethylallyl diphosphate-binding site is contributed by H127. H127 is a binding site for isopentenyl diphosphate. E129 acts as the Proton donor in catalysis. A (2E)-4-hydroxy-3-methylbut-2-enyl diphosphate-binding site is contributed by T167. C197 is a [4Fe-4S] cluster binding site. (2E)-4-hydroxy-3-methylbut-2-enyl diphosphate contacts are provided by S225, S226, N227, and S269. Dimethylallyl diphosphate-binding residues include S225, S226, N227, and S269. Positions 225, 226, 227, and 269 each coordinate isopentenyl diphosphate.

This sequence belongs to the IspH family. It depends on [4Fe-4S] cluster as a cofactor.

The enzyme catalyses isopentenyl diphosphate + 2 oxidized [2Fe-2S]-[ferredoxin] + H2O = (2E)-4-hydroxy-3-methylbut-2-enyl diphosphate + 2 reduced [2Fe-2S]-[ferredoxin] + 2 H(+). The catalysed reaction is dimethylallyl diphosphate + 2 oxidized [2Fe-2S]-[ferredoxin] + H2O = (2E)-4-hydroxy-3-methylbut-2-enyl diphosphate + 2 reduced [2Fe-2S]-[ferredoxin] + 2 H(+). It functions in the pathway isoprenoid biosynthesis; dimethylallyl diphosphate biosynthesis; dimethylallyl diphosphate from (2E)-4-hydroxy-3-methylbutenyl diphosphate: step 1/1. Its pathway is isoprenoid biosynthesis; isopentenyl diphosphate biosynthesis via DXP pathway; isopentenyl diphosphate from 1-deoxy-D-xylulose 5-phosphate: step 6/6. Functionally, catalyzes the conversion of 1-hydroxy-2-methyl-2-(E)-butenyl 4-diphosphate (HMBPP) into a mixture of isopentenyl diphosphate (IPP) and dimethylallyl diphosphate (DMAPP). Acts in the terminal step of the DOXP/MEP pathway for isoprenoid precursor biosynthesis. This is 4-hydroxy-3-methylbut-2-enyl diphosphate reductase from Rhodopirellula baltica (strain DSM 10527 / NCIMB 13988 / SH1).